The following is a 303-amino-acid chain: Paired immunoglobulin-like type 2 receptor alpha (303 aa).

Residues M1–L19 form the signal peptide. Residues Q20–A197 lie on the Extracellular side of the membrane. The Ig-like V-type domain occupies L32 to T150. N-linked (GlcNAc...) asparagine glycosylation occurs at N100. The helical transmembrane segment at V198 to L218 threads the bilayer. The Cytoplasmic segment spans residues R219–A303. Positions Q226–T296 are disordered. 2 short sequence motifs (ITIM motif) span residues I267 to L272 and T296 to L301.

In terms of assembly, monomer. Interacts with PTPN6/SHP-1 and PTPN11/SHP-2 upon tyrosine phosphorylation. As to quaternary structure, (Microbial infection) Interacts with herpes simplex virus 1 glycoprotein B. According to PubMed:10660620, N- and O-glycosylated. According to PubMed:10903717, only N-glycosylated. In terms of processing, phosphorylated on tyrosine residues. In terms of tissue distribution, predominantly detected in hemopoietic tissues and is expressed by monocytes, macrophages, and granulocytes, but not by lymphocytes. Also strongly expressed by dendritic cells (DC); preferentially by CD14+/CD1a- DC derived from CD34+ progenitors. Also expressed by CD11c+ blood and tonsil DC, but not by CD11c- DC precursors.

It localises to the cell membrane. The protein resides in the secreted. Its function is as follows. Paired receptors consist of highly related activating and inhibitory receptors and are widely involved in the regulation of the immune system. PILRA is thought to act as a cellular signaling inhibitory receptor by recruiting cytoplasmic phosphatases like PTPN6/SHP-1 and PTPN11/SHP-2 via their SH2 domains that block signal transduction through dephosphorylation of signaling molecules. Receptor for PIANP. (Microbial infection) Acts as an entry co-receptor for herpes simplex virus 1. This Homo sapiens (Human) protein is Paired immunoglobulin-like type 2 receptor alpha (PILRA).